The chain runs to 61 residues: Small ribosomal subunit protein uS14 (61 aa).

Residues C24, C27, C40, and C43 each contribute to the Zn(2+) site.

Belongs to the universal ribosomal protein uS14 family. Zinc-binding uS14 subfamily. Part of the 30S ribosomal subunit. Contacts proteins S3 and S10. Zn(2+) is required as a cofactor.

In terms of biological role, binds 16S rRNA, required for the assembly of 30S particles and may also be responsible for determining the conformation of the 16S rRNA at the A site. The protein is Small ribosomal subunit protein uS14 of Acidithiobacillus ferrooxidans (strain ATCC 23270 / DSM 14882 / CIP 104768 / NCIMB 8455) (Ferrobacillus ferrooxidans (strain ATCC 23270)).